The sequence spans 30 residues: Cyclotide hyen-F (30 aa).

A cross-link (cyclopeptide (Gly-Asn)) is located at residues 1–30 (GLPCGESCVYIPCISTVLGCSCSNKVCYRN). 3 disulfides stabilise this stretch: cysteine 4–cysteine 20, cysteine 8–cysteine 22, and cysteine 13–cysteine 27.

This is a cyclic peptide. In terms of tissue distribution, detected in seeds (at protein level).

Its function is as follows. Probably participates in a plant defense mechanism. This is Cyclotide hyen-F from Pigea enneasperma (Spade flower).